Here is a 349-residue protein sequence, read N- to C-terminus: Cobalt-precorrin-5B C(1)-methyltransferase (349 aa).

It belongs to the CbiD family.

It carries out the reaction Co-precorrin-5B + S-adenosyl-L-methionine = Co-precorrin-6A + S-adenosyl-L-homocysteine. Its pathway is cofactor biosynthesis; adenosylcobalamin biosynthesis; cob(II)yrinate a,c-diamide from sirohydrochlorin (anaerobic route): step 6/10. Its function is as follows. Catalyzes the methylation of C-1 in cobalt-precorrin-5B to form cobalt-precorrin-6A. This Saccharolobus islandicus (strain M.16.27) (Sulfolobus islandicus) protein is Cobalt-precorrin-5B C(1)-methyltransferase.